The chain runs to 153 residues: Aspartate carbamoyltransferase regulatory chain (153 aa).

Positions 109, 114, 138, and 141 each coordinate Zn(2+).

This sequence belongs to the PyrI family. Contains catalytic and regulatory chains. Zn(2+) is required as a cofactor.

In terms of biological role, involved in allosteric regulation of aspartate carbamoyltransferase. This is Aspartate carbamoyltransferase regulatory chain from Vibrio parahaemolyticus serotype O3:K6 (strain RIMD 2210633).